Consider the following 397-residue polypeptide: Serpin B10 (397 aa).

The Nuclear localization signal signature appears at 74-77 (KKRK).

Belongs to the serpin family. Ov-serpin subfamily.

The protein localises to the nucleus. It localises to the cytoplasm. Its function is as follows. Protease inhibitor that may play a role in the regulation of protease activities during hematopoiesis and apoptosis induced by TNF. May regulate protease activities in the cytoplasm and in the nucleus. The polypeptide is Serpin B10 (Serpinb10) (Mus musculus (Mouse)).